The sequence spans 358 residues: Phospho-N-acetylmuramoyl-pentapeptide-transferase (358 aa).

Helical transmembrane passes span 13-47 (LFILNTFALIVTSYLFNNFIFTGVYILFFFISIFI), 81-101 (MGGIFMIIPFLILLLIITINL), 106-126 (LILLLLTVFGFFITGFLDDYL), 148-168 (ISIIFILLAYEKNLISPLITI), 171-191 (SWAINMNIFILPVAFLVLVGI), 201-221 (LDGLAAGCSGIVFYGLGTEIL), 228-248 (LFVFSILCFSMSGICLGFLKY), 255-275 (IFMGDTGSLSIGAILGSIALL), 278-298 (SIFTLSIFSGIFIIESLSVII), and 336-356 (IVENFWKINILLVILGIVLKI).

It belongs to the glycosyltransferase 4 family. MraY subfamily. Requires Mg(2+) as cofactor.

It is found in the cell inner membrane. The catalysed reaction is UDP-N-acetyl-alpha-D-muramoyl-L-alanyl-gamma-D-glutamyl-meso-2,6-diaminopimeloyl-D-alanyl-D-alanine + di-trans,octa-cis-undecaprenyl phosphate = di-trans,octa-cis-undecaprenyl diphospho-N-acetyl-alpha-D-muramoyl-L-alanyl-D-glutamyl-meso-2,6-diaminopimeloyl-D-alanyl-D-alanine + UMP. It functions in the pathway cell wall biogenesis; peptidoglycan biosynthesis. Catalyzes the initial step of the lipid cycle reactions in the biosynthesis of the cell wall peptidoglycan: transfers peptidoglycan precursor phospho-MurNAc-pentapeptide from UDP-MurNAc-pentapeptide onto the lipid carrier undecaprenyl phosphate, yielding undecaprenyl-pyrophosphoryl-MurNAc-pentapeptide, known as lipid I. The polypeptide is Phospho-N-acetylmuramoyl-pentapeptide-transferase (Prochlorococcus marinus (strain MIT 9301)).